We begin with the raw amino-acid sequence, 260 residues long: Triosephosphate isomerase (260 aa).

Position 11-13 (11-13) interacts with substrate; that stretch reads NWK. The Electrophile role is filled by histidine 103. Residue glutamate 175 is the Proton acceptor of the active site. Residues glycine 181, serine 220, and 241–242 each bind substrate; that span reads GG.

The protein belongs to the triosephosphate isomerase family. In terms of assembly, homodimer.

The protein resides in the cytoplasm. The enzyme catalyses D-glyceraldehyde 3-phosphate = dihydroxyacetone phosphate. It participates in carbohydrate biosynthesis; gluconeogenesis. Its pathway is carbohydrate degradation; glycolysis; D-glyceraldehyde 3-phosphate from glycerone phosphate: step 1/1. Involved in the gluconeogenesis. Catalyzes stereospecifically the conversion of dihydroxyacetone phosphate (DHAP) to D-glyceraldehyde-3-phosphate (G3P). This is Triosephosphate isomerase from Shewanella frigidimarina (strain NCIMB 400).